We begin with the raw amino-acid sequence, 140 residues long: 3-hydroxyacyl-[acyl-carrier-protein] dehydratase FabZ (140 aa).

His47 is an active-site residue.

This sequence belongs to the thioester dehydratase family. FabZ subfamily.

The protein localises to the cytoplasm. The enzyme catalyses a (3R)-hydroxyacyl-[ACP] = a (2E)-enoyl-[ACP] + H2O. Its function is as follows. Involved in unsaturated fatty acids biosynthesis. Catalyzes the dehydration of short chain beta-hydroxyacyl-ACPs and long chain saturated and unsaturated beta-hydroxyacyl-ACPs. The sequence is that of 3-hydroxyacyl-[acyl-carrier-protein] dehydratase FabZ from Streptococcus gordonii (strain Challis / ATCC 35105 / BCRC 15272 / CH1 / DL1 / V288).